The primary structure comprises 308 residues: B- and T-lymphocyte attenuator (308 aa).

The first 29 residues, 1 to 29 (MKTVPAMLVTPRSFREFFILLLGLWSILC), serve as a signal peptide directing secretion. Residues 30 to 183 (KEPTKRIGEE…ERPGRTWLLY (154 aa)) are Extracellular-facing. The Ig-like V-type domain occupies 32–134 (PTKRIGEECR…SANLNSEVIN (103 aa)). Disulfide bonds link Cys-40-Cys-69, Cys-64-Cys-124, and Cys-78-Cys-85. Asn-49, Asn-74, Asn-81, Asn-148, and Asn-165 each carry an N-linked (GlcNAc...) asparagine glycan. A helical membrane pass occupies residues 184-204 (ALLPLGTSLLLLACVCLLCFL). The Cytoplasmic portion of the chain corresponds to 205–308 (RRIQGKEKKP…TEYASICVRS (104 aa)).

As to quaternary structure, interacts with tyrosine phosphatases PTPN6/SHP-1 and PTPN11/SHP-2. Interacts with TNFRSF14/HVEM (via cysteine-rich domain 1). Post-translationally, phosphorylated on Tyr residues by TNFRSF14 and by antigen receptors cross-linking, both inducing association with PTPN6 and PTPN11. N-glycosylated.

It is found in the cell membrane. Inhibitory receptor on lymphocytes that negatively regulates antigen receptor signaling via PTPN6/SHP-1 and PTPN11/SHP-2. May interact in cis (on the same cell) or in trans (on other cells) with TNFRSF14. In cis interactions, appears to play an immune regulatory role inhibiting in trans interactions in naive T cells to maintain a resting state. In trans interactions, can predominate during adaptive immune response to provide survival signals to effector T cells. In Rattus norvegicus (Rat), this protein is B- and T-lymphocyte attenuator.